The chain runs to 258 residues: Phosphate import ATP-binding protein PstB (258 aa).

The region spanning 5-247 (LDLKGVNIYY…EKIFSNPSQK (243 aa)) is the ABC transporter domain. 37 to 44 (GPSGCGKT) contacts ATP.

The protein belongs to the ABC transporter superfamily. Phosphate importer (TC 3.A.1.7) family. In terms of assembly, the complex is composed of two ATP-binding proteins (PstB), two transmembrane proteins (PstC and PstA) and a solute-binding protein (PstS).

It is found in the cell membrane. The enzyme catalyses phosphate(out) + ATP + H2O = ADP + 2 phosphate(in) + H(+). Part of the ABC transporter complex PstSACB involved in phosphate import. Responsible for energy coupling to the transport system. The protein is Phosphate import ATP-binding protein PstB of Mycolicibacterium paratuberculosis (strain ATCC BAA-968 / K-10) (Mycobacterium paratuberculosis).